A 542-amino-acid polypeptide reads, in one-letter code: Phosphoacetylglucosamine mutase (542 aa).

At Met-1 the chain carries N-acetylmethionine. Phosphothreonine is present on Thr-62. Residue Ser-64 is the Phosphoserine intermediate of the active site. Residues Ser-64, Asp-276, Asp-278, and Asp-280 each contribute to the Mg(2+) site. A Phosphoserine modification is found at Ser-64. Residues Glu-370–Asn-372, Arg-496–Thr-500, and Arg-505 contribute to the substrate site.

This sequence belongs to the phosphohexose mutase family. It depends on Mg(2+) as a cofactor.

It carries out the reaction N-acetyl-alpha-D-glucosamine 1-phosphate = N-acetyl-D-glucosamine 6-phosphate. It functions in the pathway nucleotide-sugar biosynthesis; UDP-N-acetyl-alpha-D-glucosamine biosynthesis; N-acetyl-alpha-D-glucosamine 1-phosphate from alpha-D-glucosamine 6-phosphate (route I): step 2/2. In terms of biological role, catalyzes the conversion of GlcNAc-6-P into GlcNAc-1-P during the synthesis of uridine diphosphate/UDP-GlcNAc, a sugar nucleotide critical to multiple glycosylation pathways including protein N- and O-glycosylation. The sequence is that of Phosphoacetylglucosamine mutase from Mus musculus (Mouse).